Here is a 416-residue protein sequence, read N- to C-terminus: Sulfoquinovosyl glycerol-binding protein SmoF (416 aa).

The signal sequence occupies residues 1–29 (MTLKTIRGKALMGAALCATMLTFSGQAFA). Gln40 contributes to the 3-(6-sulfo-alpha-D-quinovosyl)glycerol binding site. Residue His41 participates in 6-sulfo-D-quinovose binding. The 3-(6-sulfo-alpha-D-quinovosyl)glycerol site is built by Ser71, Asp95, Asp141, Gly194, Thr248, Gly303, Trp304, and Arg373. 6-sulfo-D-quinovose is bound by residues Gly303, Trp304, and Arg373.

It belongs to the bacterial solute-binding protein 1 family. In terms of assembly, the complex is probably composed of two ATP-binding proteins (SmoE), two transmembrane proteins (SmoG and SmoH) and a solute-binding protein (SmoF).

The protein resides in the periplasm. Its function is as follows. Part of the ABC transporter complex SmoEFGH involved in sulfoquinovosyl glycerol (SQGro) uptake. Binds sulfoquinovosyl glycerol (SQGro). Can also bind sulfoquinovose (SQ), methyl alpha-sulfoquinovoside (SQMe) and a short-chain derivative of sulfoquinovosyl diacylglycerol (SQDG). Cannot bind D-glucose and D-glucuronic acid. This chain is Sulfoquinovosyl glycerol-binding protein SmoF, found in Agrobacterium fabrum (strain C58 / ATCC 33970) (Agrobacterium tumefaciens (strain C58)).